The following is a 44-amino-acid chain: Putative protein PsbN (44 aa).

Residues 3-23 (IISFLSTIFLGFFIISTTIYS) traverse the membrane as a helical segment.

It belongs to the PsbN family.

The protein resides in the plastid. Its subcellular location is the chloroplast thylakoid membrane. May play a role in photosystem I and II biogenesis. The protein is Putative protein PsbN of Euglena gracilis.